The following is a 479-amino-acid chain: RAC-gamma serine/threonine-protein kinase (479 aa).

S2 is subject to N-acetylserine. In terms of domain architecture, PH spans 5–107 (TIVKEGWVQK…WTEAIQAVAD (103 aa)). Residues C59 and C76 are joined by a disulfide bond. Residues 148-405 (FDYLKLLGKG…AKEIMRHSFF (258 aa)) enclose the Protein kinase domain. Residues 154 to 162 (LGKGTFGKV) and K177 each bind ATP. The Proton acceptor role is filled by D271. C293 and C307 are disulfide-bonded. T302 carries O-linked (GlcNAc) threonine glycosylation. T305 carries the post-translational modification Phosphothreonine; by PDPK1. O-linked (GlcNAc) threonine glycosylation occurs at T309. One can recognise an AGC-kinase C-terminal domain in the interval 406-479 (SGVNWQDVYD…QFSYSASGRE (74 aa)). Residues 445 to 479 (TITPPEKYDDDGMDGMDNERRPHFPQFSYSASGRE) form a disordered region. T447 carries the post-translational modification Phosphothreonine. The residue at position 472 (S472) is a Phosphoserine; by PKC/PRKCZ. An O-linked (GlcNAc) serine; alternate glycan is attached at S472.

Belongs to the protein kinase superfamily. AGC Ser/Thr protein kinase family. RAC subfamily. In terms of assembly, interacts (via PH domain) with TCL1A; this enhances AKT3 phosphorylation and activation. Interacts with TRAF6. Interacts with KCTD20. Interacts with BTBD10. In terms of processing, phosphorylation on Thr-305 and Ser-472 is required for full activity. Phosphorylation of the activation loop at Thr-305 by PDPK1/PDK1 is a prerequisite for full activation. Phosphorylation at Ser-472 by mTORC2 in response to growth factors plays a key role in AKT1 activation by facilitating subsequent phosphorylation of the activation loop by PDPK1/PDK1. Post-translationally, ubiquitinated. When fully phosphorylated and translocated into the nucleus, undergoes 'Lys-48'-polyubiquitination catalyzed by TTC3, leading to its degradation by the proteasome. O-GlcNAcylation at Thr-302 and Thr-309 inhibits activating phosphorylation at Thr-305 via disrupting the interaction between AKT and PDPK1/PDK1. Isoform 1 is expressed in prostate, testis, uterus and mammary gland and isoform 2 is expressed in prostate, testis and mammary gland.

It is found in the nucleus. Its subcellular location is the cytoplasm. The protein resides in the membrane. It catalyses the reaction L-seryl-[protein] + ATP = O-phospho-L-seryl-[protein] + ADP + H(+). The enzyme catalyses L-threonyl-[protein] + ATP = O-phospho-L-threonyl-[protein] + ADP + H(+). With respect to regulation, two specific sites, one in the kinase domain (Thr-305) and the other in the C-terminal regulatory region (Ser-472), need to be phosphorylated for its full activation. IGF-1 leads to the activation of AKT3, which may play a role in regulating cell survival. Its function is as follows. AKT3 is one of 3 closely related serine/threonine-protein kinases (AKT1, AKT2 and AKT3) called the AKT kinase, and which regulate many processes including metabolism, proliferation, cell survival, growth and angiogenesis. This is mediated through serine and/or threonine phosphorylation of a range of downstream substrates. Over 100 substrate candidates have been reported so far, but for most of them, no isoform specificity has been reported. AKT3 is the least studied AKT isoform. It plays an important role in brain development and is crucial for the viability of malignant glioma cells. AKT3 isoform may also be the key molecule in up-regulation and down-regulation of MMP13 via IL13. Required for the coordination of mitochondrial biogenesis with growth factor-induced increases in cellular energy demands. Down-regulation by RNA interference reduces the expression of the phosphorylated form of BAD, resulting in the induction of caspase-dependent apoptosis. In Mus musculus (Mouse), this protein is RAC-gamma serine/threonine-protein kinase (Akt3).